The sequence spans 370 residues: ECF RNA polymerase sigma factor SigG (370 aa).

The sigma-70 factor domain-2 stretch occupies residues 63–129 (EPYRRELLAH…LTALEGRRRR (67 aa)). Positions 85–88 (DLVQ) match the Polymerase core binding motif. The sigma-70 factor domain-4 stretch occupies residues 180–232 (LAFVAALQHLSPRQRAVLLLRDVLQWKSAEVADAIGTSTVAVNSLLQRARSQL). The segment at residues 207-226 (SAEVADAIGTSTVAVNSLLQ) is a DNA-binding region (H-T-H motif).

The protein belongs to the sigma-70 factor family. ECF subfamily. In terms of assembly, interacts transiently with the RNA polymerase catalytic core formed by RpoA, RpoB, RpoC and RpoZ (2 alpha, 1 beta, 1 beta' and 1 omega subunit) to form the RNA polymerase holoenzyme that can initiate transcription.

Sigma factors are initiation factors that promote the attachment of RNA polymerase to specific initiation sites and are then released. Extracytoplasmic function (ECF) sigma factors are held in an inactive form by a cognate anti-sigma factor until released, although no anti-sigma factor is known for this protein. May be involved in host intracellular survival after infection (strains H37Rv and CDC 1551). A role in the SOS response is controversial; it has been seen in strain CDC 1551 but not in H37Rv. The protein is ECF RNA polymerase sigma factor SigG (sigG) of Mycobacterium tuberculosis (strain CDC 1551 / Oshkosh).